Here is a 264-residue protein sequence, read N- to C-terminus: uncharacterized protein (264 aa).

Polar residues-rich tracts occupy residues 1–18 (MFEN…SSRS), 73–83 (SLGSVGTTEVN), and 126–139 (KTTQ…QPVL). 2 disordered regions span residues 1–47 (MFEN…WVGS) and 68–264 (RKEP…LSFE). Residues 149–171 (SSGQPQVSSSAQPSPADASQPEA) show a composition bias toward low complexity. A compositionally biased stretch (basic and acidic residues) spans 194 to 212 (LIHKDGQDDPKLKVTECRR). 4 positions are modified to phosphoserine: S214, S215, S241, and S250.

This is an uncharacterized protein from Bos taurus (Bovine).